We begin with the raw amino-acid sequence, 711 residues long: Ent-copalyl diphosphate synthase 1 (711 aa).

Residue lysine 145 participates in substrate binding. Mg(2+)-binding residues include aspartate 277 and aspartate 279. Residues 277-280 (DIDD) carry the DXDD motif motif. Lysine 364 serves as a coordination point for substrate.

Belongs to the terpene synthase family. Tpsc subfamily. It depends on Mg(2+) as a cofactor.

The enzyme catalyses (2E,6E,10E)-geranylgeranyl diphosphate = ent-copalyl diphosphate. It participates in secondary metabolite biosynthesis; terpenoid biosynthesis. In terms of biological role, involved in the biosynthesis of ent-kaurene diterpenoids natural products such as oridonin, miltiradiene, eriocalyxin B and nezukol, known to exhibit antitumor, anti-inflammatory and antibacterial activities. Catalyzes the conversion of (2E,6E,10E)-geranylgeranyl diphosphate (GGPP) to ent-copalyl diphosphate (ent-CPP). This Isodon japonicus (Scutellaria japonica) protein is Ent-copalyl diphosphate synthase 1.